The chain runs to 1373 residues: DNA-directed RNA polymerase subunit beta (1373 aa).

The protein belongs to the RNA polymerase beta chain family. The RNAP catalytic core consists of 2 alpha, 1 beta, 1 beta' and 1 omega subunit. When a sigma factor is associated with the core the holoenzyme is formed, which can initiate transcription.

The enzyme catalyses RNA(n) + a ribonucleoside 5'-triphosphate = RNA(n+1) + diphosphate. In terms of biological role, DNA-dependent RNA polymerase catalyzes the transcription of DNA into RNA using the four ribonucleoside triphosphates as substrates. This chain is DNA-directed RNA polymerase subunit beta, found in Lawsonia intracellularis (strain PHE/MN1-00).